The following is a 313-amino-acid chain: MSTREIRIATRKSALALWQAEYVKARLEQAHPGLLVTLVPMVSRGDKLLDAPLAKIGGKGLFVKELETALLDNEADIAVHSMKDVPMDFPEGLGLYCICEREDPRDAFVSNTFDSLEALPAGSIVGTSSLRRQAQLLARRPDLQIRFLRGNVNTRLAKLDAGEYDAIILAAAGLIRLGFEDRITSTISVDDSLPAGGQGAVGIECRSADVEIHALLAPLHHADTADRVVAERALNKHLNGGCQVPIACYAVLEGDQLWLRGLVGQPSGGTLLVADARAPRTAAETLGVQVAEDLLSQGAEAILKEVYGEAGHP.

S-(dipyrrolylmethanemethyl)cysteine is present on Cys242.

This sequence belongs to the HMBS family. As to quaternary structure, monomer. Requires dipyrromethane as cofactor.

It carries out the reaction 4 porphobilinogen + H2O = hydroxymethylbilane + 4 NH4(+). Its pathway is porphyrin-containing compound metabolism; protoporphyrin-IX biosynthesis; coproporphyrinogen-III from 5-aminolevulinate: step 2/4. Functionally, tetrapolymerization of the monopyrrole PBG into the hydroxymethylbilane pre-uroporphyrinogen in several discrete steps. In Pseudomonas putida (strain GB-1), this protein is Porphobilinogen deaminase.